The following is a 152-amino-acid chain: Large ribosomal subunit protein uL30 (152 aa).

It belongs to the universal ribosomal protein uL30 family. As to quaternary structure, part of the 50S ribosomal subunit.

In Archaeoglobus fulgidus (strain ATCC 49558 / DSM 4304 / JCM 9628 / NBRC 100126 / VC-16), this protein is Large ribosomal subunit protein uL30.